We begin with the raw amino-acid sequence, 454 residues long: Tubulin beta-2 chain (454 aa).

GTP is bound by residues Q11, E69, S138, G142, T143, G144, N204, and N226. Residue E69 participates in Mg(2+) binding. The interval 426–454 (QEASVDDEAMEDDAEAEGGAGQNEAVEEF) is disordered. Acidic residues predominate over residues 429-441 (SVDDEAMEDDAEA).

Belongs to the tubulin family. Dimer of alpha and beta chains. A typical microtubule is a hollow water-filled tube with an outer diameter of 25 nm and an inner diameter of 15 nM. Alpha-beta heterodimers associate head-to-tail to form protofilaments running lengthwise along the microtubule wall with the beta-tubulin subunit facing the microtubule plus end conferring a structural polarity. Microtubules usually have 13 protofilaments but different protofilament numbers can be found in some organisms and specialized cells. Requires Mg(2+) as cofactor.

The protein resides in the cytoplasm. Its subcellular location is the cytoskeleton. The protein localises to the spindle. It is found in the nucleus. Its function is as follows. Tubulin is the major constituent of microtubules, a cylinder consisting of laterally associated linear protofilaments composed of alpha- and beta-tubulin heterodimers. Microtubules grow by the addition of GTP-tubulin dimers to the microtubule end, where a stabilizing cap forms. Below the cap, tubulin dimers are in GDP-bound state, owing to GTPase activity of alpha-tubulin. This is the major beta tubulin of mitotic spindle. This is Tubulin beta-2 chain (BETC) from Physarum polycephalum (Slime mold).